Reading from the N-terminus, the 276-residue chain is Formamidopyrimidine-DNA glycosylase (276 aa).

The active-site Schiff-base intermediate with DNA is the proline 2. The active-site Proton donor is glutamate 3. The Proton donor; for beta-elimination activity role is filled by lysine 58. Residues histidine 92, arginine 111, and lysine 154 each contribute to the DNA site. Residues 239–273 (QVYGHVGEPCPVCGTKFEKIKVNGRGTTFCPHCQV) form an FPG-type zinc finger. Residue arginine 263 is the Proton donor; for delta-elimination activity of the active site.

The protein belongs to the FPG family. Monomer. Zn(2+) serves as cofactor.

The enzyme catalyses Hydrolysis of DNA containing ring-opened 7-methylguanine residues, releasing 2,6-diamino-4-hydroxy-5-(N-methyl)formamidopyrimidine.. It catalyses the reaction 2'-deoxyribonucleotide-(2'-deoxyribose 5'-phosphate)-2'-deoxyribonucleotide-DNA = a 3'-end 2'-deoxyribonucleotide-(2,3-dehydro-2,3-deoxyribose 5'-phosphate)-DNA + a 5'-end 5'-phospho-2'-deoxyribonucleoside-DNA + H(+). In terms of biological role, involved in base excision repair of DNA damaged by oxidation or by mutagenic agents. Acts as a DNA glycosylase that recognizes and removes damaged bases. Has a preference for oxidized purines, such as 7,8-dihydro-8-oxoguanine (8-oxoG). Has AP (apurinic/apyrimidinic) lyase activity and introduces nicks in the DNA strand. Cleaves the DNA backbone by beta-delta elimination to generate a single-strand break at the site of the removed base with both 3'- and 5'-phosphates. The protein is Formamidopyrimidine-DNA glycosylase of Lactobacillus helveticus (strain DPC 4571).